Reading from the N-terminus, the 319-residue chain is Pre T-cell antigen receptor alpha (319 aa).

The first 16 residues, 1 to 16 (MAESWLLLLLALGCPA), serve as a signal peptide directing secretion. Over 17 to 160 (LPTEVTTLLR…LRGTRALVLR (144 aa)) the chain is Extracellular. Cysteine 58 and cysteine 118 form a disulfide bridge. Asparagine 78 carries an N-linked (GlcNAc...) asparagine glycan. The chain crosses the membrane as a helical span at residues 161–181 (LGALRLLLFKLLLLDVLLTCG). Residues 182–319 (RLHAPPAARG…PPADPSFPGG (138 aa)) are Cytoplasmic-facing. Residues 189-207 (ARGDPAGASGPGAPSLPAP) show a composition bias toward low complexity. The segment at 189-293 (ARGDPAGASG…VLRAWSSGPS (105 aa)) is disordered. Basic residues predominate over residues 260–271 (RRRRVHTRRPRR).

In terms of assembly, heterodimer with TCRB; disulfide linked. This heterodimer assembles with CD3 proteins into a signaling-competent pre-T-cell receptor complex. Interacts with RHBDD1.

The protein localises to the membrane. It is found in the cell membrane. In terms of biological role, component of the pre-T-cell receptor complex (composed of PTCRA, TCRB and the CD3 complex) that has a crucial role in early T-cell development, particularly alpha-beta T cell differentiation. This Bos taurus (Bovine) protein is Pre T-cell antigen receptor alpha (PTCRA).